Consider the following 292-residue polypeptide: Elongation factor Ts (292 aa).

Positions 79–82 (TDFV) are involved in Mg(2+) ion dislocation from EF-Tu.

This sequence belongs to the EF-Ts family.

Its subcellular location is the cytoplasm. Its function is as follows. Associates with the EF-Tu.GDP complex and induces the exchange of GDP to GTP. It remains bound to the aminoacyl-tRNA.EF-Tu.GTP complex up to the GTP hydrolysis stage on the ribosome. In Xanthomonas euvesicatoria pv. vesicatoria (strain 85-10) (Xanthomonas campestris pv. vesicatoria), this protein is Elongation factor Ts.